A 273-amino-acid chain; its full sequence is uncharacterized protein (273 aa).

A compositionally biased stretch (basic residues) spans 1–10 (MSSKKVKYNP). Disordered stretches follow at residues 1 to 32 (MSSK…FGFN) and 50 to 124 (EDVE…QSSP). Polar residues-rich tracts occupy residues 12–24 (KSAS…SASA), 55–64 (QSFNGKSSNL), and 92–124 (PQSS…QSSP). Serine 123 carries the post-translational modification Phosphoserine.

It is found in the nucleus. Its subcellular location is the cytoplasm. It localises to the cytoskeleton. The protein localises to the spindle. This is an uncharacterized protein from Schizosaccharomyces pombe (strain 972 / ATCC 24843) (Fission yeast).